A 424-amino-acid chain; its full sequence is 3-isopropylmalate dehydratase large subunit 2 (424 aa).

The [4Fe-4S] cluster site is built by C299, C359, and C362.

It belongs to the aconitase/IPM isomerase family. LeuC type 2 subfamily. In terms of assembly, heterodimer of LeuC and LeuD. It depends on [4Fe-4S] cluster as a cofactor.

It carries out the reaction (2R,3S)-3-isopropylmalate = (2S)-2-isopropylmalate. Its pathway is amino-acid biosynthesis; L-leucine biosynthesis; L-leucine from 3-methyl-2-oxobutanoate: step 2/4. Catalyzes the isomerization between 2-isopropylmalate and 3-isopropylmalate, via the formation of 2-isopropylmaleate. The chain is 3-isopropylmalate dehydratase large subunit 2 from Rubrobacter xylanophilus (strain DSM 9941 / JCM 11954 / NBRC 16129 / PRD-1).